The following is a 617-amino-acid chain: Neopullulanase SusA (617 aa).

An N-terminal signal peptide occupies residues methionine 1 to alanine 22. Residues asparagine 138, asparagine 143, aspartate 144, glycine 164, and aspartate 166 each coordinate Ca(2+). Residues aspartate 331 and glutamate 360 contribute to the active site.

Belongs to the glycosyl hydrolase 13 family. Ca(2+) serves as cofactor.

The protein localises to the periplasm. The catalysed reaction is Hydrolysis of pullulan to panose (6-alpha-D-glucosylmaltose).. The protein operates within glycan degradation; starch degradation. Its function is as follows. Neopullulanase that cleaves 1,4-alpha-glucosidic linkages in starch to produce disaccharides or trisaccharides in starch degradation. In Bacteroides thetaiotaomicron (strain ATCC 29148 / DSM 2079 / JCM 5827 / CCUG 10774 / NCTC 10582 / VPI-5482 / E50), this protein is Neopullulanase SusA (susA).